The sequence spans 147 residues: Hemoglobin subunit deltaH (147 aa).

One can recognise a Globin domain in the interval 3-147 (RLTDSEKAEV…MANALAHKYH (145 aa)). Heme b is bound by residues H64 and H93.

Belongs to the globin family. As to quaternary structure, heterotetramer of two delta chains and two alpha chains. As to expression, red blood cells.

The protein is Hemoglobin subunit deltaH of Procavia capensis (Rock hyrax).